A 336-amino-acid polypeptide reads, in one-letter code: Glycerol-3-phosphate dehydrogenase [NAD(P)+] (336 aa).

NADPH contacts are provided by serine 13, tryptophan 14, arginine 34, and lysine 108. Sn-glycerol 3-phosphate contacts are provided by lysine 108, glycine 138, and serine 140. Alanine 142 provides a ligand contact to NADPH. Lysine 193, aspartate 246, serine 256, arginine 257, and asparagine 258 together coordinate sn-glycerol 3-phosphate. The Proton acceptor role is filled by lysine 193. Arginine 257 is an NADPH binding site. NADPH is bound by residues valine 281 and glutamate 283.

It belongs to the NAD-dependent glycerol-3-phosphate dehydrogenase family.

Its subcellular location is the cytoplasm. It catalyses the reaction sn-glycerol 3-phosphate + NAD(+) = dihydroxyacetone phosphate + NADH + H(+). The enzyme catalyses sn-glycerol 3-phosphate + NADP(+) = dihydroxyacetone phosphate + NADPH + H(+). Its pathway is membrane lipid metabolism; glycerophospholipid metabolism. Catalyzes the reduction of the glycolytic intermediate dihydroxyacetone phosphate (DHAP) to sn-glycerol 3-phosphate (G3P), the key precursor for phospholipid synthesis. This is Glycerol-3-phosphate dehydrogenase [NAD(P)+] from Carboxydothermus hydrogenoformans (strain ATCC BAA-161 / DSM 6008 / Z-2901).